We begin with the raw amino-acid sequence, 149 residues long: 3-hydroxyacyl-[acyl-carrier-protein] dehydratase FabZ (149 aa).

The active site involves His-48.

It belongs to the thioester dehydratase family. FabZ subfamily.

Its subcellular location is the cytoplasm. It catalyses the reaction a (3R)-hydroxyacyl-[ACP] = a (2E)-enoyl-[ACP] + H2O. Involved in unsaturated fatty acids biosynthesis. Catalyzes the dehydration of short chain beta-hydroxyacyl-ACPs and long chain saturated and unsaturated beta-hydroxyacyl-ACPs. The polypeptide is 3-hydroxyacyl-[acyl-carrier-protein] dehydratase FabZ (Thermomicrobium roseum (strain ATCC 27502 / DSM 5159 / P-2)).